A 241-amino-acid chain; its full sequence is Carboxy-S-adenosyl-L-methionine synthase (241 aa).

S-adenosyl-L-methionine contacts are provided by residues Tyr-38, Gly-63–Ser-65, Asp-88–Asn-89, Asp-116–Ile-117, Asn-131, and Arg-198.

It belongs to the class I-like SAM-binding methyltransferase superfamily. Cx-SAM synthase family. Homodimer.

It catalyses the reaction prephenate + S-adenosyl-L-methionine = carboxy-S-adenosyl-L-methionine + 3-phenylpyruvate + H2O. Its function is as follows. Catalyzes the conversion of S-adenosyl-L-methionine (SAM) to carboxy-S-adenosyl-L-methionine (Cx-SAM). In Actinobacillus pleuropneumoniae serotype 3 (strain JL03), this protein is Carboxy-S-adenosyl-L-methionine synthase.